Here is a 94-residue protein sequence, read N- to C-terminus: Long neurotoxin LNTX8 (94 aa).

The N-terminal stretch at 1–21 is a signal peptide; sequence MKTLLLTLVVVTIMCLDLGYT. Disulfide bonds link cysteine 24–cysteine 43, cysteine 36–cysteine 64, cysteine 49–cysteine 53, cysteine 68–cysteine 79, and cysteine 80–cysteine 85.

Belongs to the three-finger toxin family. Long-chain subfamily. Type II alpha-neurotoxin sub-subfamily. As to expression, expressed by the venom gland.

The protein localises to the secreted. Binds with high affinity to muscular (alpha-1/CHRNA1) and neuronal (alpha-7/CHRNA7) nicotinic acetylcholine receptor (nAChR) and inhibits acetylcholine from binding to the receptor, thereby impairing neuromuscular and neuronal transmission. This is Long neurotoxin LNTX8 from Ophiophagus hannah (King cobra).